The sequence spans 417 residues: Alpha-galactosidase (417 aa).

Positions 1 to 55 are cleaved as a signal peptide; the sequence is MARASSSSSPPSPRLLLLLLVAVAATLLPEAAALGNFTAESRGARWRSRRARRRA. Alpha-D-galactose-binding residues include Trp71, Asp106, Asp107, Cys156, Lys183, Asp185, Trp219, Arg236, and Asp240. Disulfide bonds link Cys76/Cys108 and Cys156/Cys187. Asp185 acts as the Nucleophile in catalysis. Asp240 acts as the Proton donor in catalysis.

It belongs to the glycosyl hydrolase 27 family.

It carries out the reaction Hydrolysis of terminal, non-reducing alpha-D-galactose residues in alpha-D-galactosides, including galactose oligosaccharides, galactomannans and galactolipids.. The catalysed reaction is melibiose + H2O = D-galactose + D-glucose. The enzyme catalyses raffinose + H2O = sucrose + D-galactose. It catalyses the reaction stachyose + H2O = raffinose + D-galactose. It carries out the reaction alpha-D-Gal-(1-&gt;6)-beta-D-Man-(1-&gt;4)-beta-D-Man-(1-&gt;4)-D-Man + H2O = beta-D-Man-(1-&gt;4)-beta-D-Man-(1-&gt;4)-D-Man + D-galactose. The catalysed reaction is beta-D-Man-(1-&gt;4)-[alpha-D-Gal-(1-&gt;6)]-beta-D-Man-(1-&gt;4)-beta-D-Man-(1-&gt;4)-D-Man + H2O = beta-D-Man-(1-&gt;4)-beta-D-Man-(1-&gt;4)-beta-D-Man-(1-&gt;4)-D-Man + D-galactose. With respect to regulation, 1 mM Hg(2+) and Ag(2+) decrease activity by 98% and 96%, respectively. 1 mM Para-chloromercuribenzoic acid (PCMB) completely inhibits enzymatic activity. In terms of biological role, hydrolyzes melibiose, raffinose and stachyose in the following decreasing order of reactivity: raffinose, melibiose, stachyose. Acts on both the terminal alpha-galactosyl residue and the side-chain alpha-galactosyl residue of the galactomanno-oligosaccharides. The polypeptide is Alpha-galactosidase (Oryza sativa subsp. japonica (Rice)).